The primary structure comprises 358 residues: tRNA-specific 2-thiouridylase MnmA (358 aa).

Residues 6–13 (AMSGGVDS) and L32 each bind ATP. The Nucleophile role is filled by C101. C101 and C193 form a disulfide bridge. G125 is an ATP binding site. Residues 143–145 (KDQ) form an interaction with tRNA region. The active-site Cysteine persulfide intermediate is the C193.

Belongs to the MnmA/TRMU family.

It localises to the cytoplasm. The catalysed reaction is S-sulfanyl-L-cysteinyl-[protein] + uridine(34) in tRNA + AH2 + ATP = 2-thiouridine(34) in tRNA + L-cysteinyl-[protein] + A + AMP + diphosphate + H(+). In terms of biological role, catalyzes the 2-thiolation of uridine at the wobble position (U34) of tRNA, leading to the formation of s(2)U34. The polypeptide is tRNA-specific 2-thiouridylase MnmA (Mycolicibacterium paratuberculosis (strain ATCC BAA-968 / K-10) (Mycobacterium paratuberculosis)).